A 23-amino-acid polypeptide reads, in one-letter code: Defensin-like protein 2 (23 aa).

Pyrrolidone carboxylic acid is present on Gln1.

Belongs to the DEFL family. As to quaternary structure, forms oligomers in its native state.

Its function is as follows. Possesses antifungal activity sensitive to inorganic cations. This Brassica napus (Rape) protein is Defensin-like protein 2.